The chain runs to 346 residues: Probable alcohol dehydrogenase AdhA (346 aa).

The Zn(2+) site is built by cysteine 51, histidine 73, cysteine 109, cysteine 112, cysteine 115, cysteine 123, and cysteine 165.

This sequence belongs to the zinc-containing alcohol dehydrogenase family. The cofactor is Zn(2+).

It catalyses the reaction a primary alcohol + NAD(+) = an aldehyde + NADH + H(+). The enzyme catalyses a secondary alcohol + NAD(+) = a ketone + NADH + H(+). This Mycobacterium tuberculosis (strain CDC 1551 / Oshkosh) protein is Probable alcohol dehydrogenase AdhA (adhA).